A 103-amino-acid polypeptide reads, in one-letter code: Glutaredoxin-C11 (103 aa).

Residues Met1–Trp102 enclose the Glutaredoxin domain. Cys21 and Cys24 are oxidised to a cystine.

Belongs to the glutaredoxin family. CC-type subfamily.

It is found in the cytoplasm. Has a glutathione-disulfide oxidoreductase activity in the presence of NADPH and glutathione reductase. Reduces low molecular weight disulfides and proteins. The sequence is that of Glutaredoxin-C11 (GRXC11) from Arabidopsis thaliana (Mouse-ear cress).